The following is a 177-amino-acid chain: ATP synthase subunit delta (177 aa).

This sequence belongs to the ATPase delta chain family. As to quaternary structure, F-type ATPases have 2 components, F(1) - the catalytic core - and F(0) - the membrane proton channel. F(1) has five subunits: alpha(3), beta(3), gamma(1), delta(1), epsilon(1). F(0) has three main subunits: a(1), b(2) and c(10-14). The alpha and beta chains form an alternating ring which encloses part of the gamma chain. F(1) is attached to F(0) by a central stalk formed by the gamma and epsilon chains, while a peripheral stalk is formed by the delta and b chains.

The protein localises to the cell inner membrane. In terms of biological role, f(1)F(0) ATP synthase produces ATP from ADP in the presence of a proton or sodium gradient. F-type ATPases consist of two structural domains, F(1) containing the extramembraneous catalytic core and F(0) containing the membrane proton channel, linked together by a central stalk and a peripheral stalk. During catalysis, ATP synthesis in the catalytic domain of F(1) is coupled via a rotary mechanism of the central stalk subunits to proton translocation. This protein is part of the stalk that links CF(0) to CF(1). It either transmits conformational changes from CF(0) to CF(1) or is implicated in proton conduction. This chain is ATP synthase subunit delta, found in Neisseria meningitidis serogroup A / serotype 4A (strain DSM 15465 / Z2491).